Here is a 215-residue protein sequence, read N- to C-terminus: Urease accessory protein UreG 2 (215 aa).

GTP is bound at residue 11 to 18 (GPVGSGKT).

This sequence belongs to the SIMIBI class G3E GTPase family. UreG subfamily. As to quaternary structure, homodimer. UreD, UreF and UreG form a complex that acts as a GTP-hydrolysis-dependent molecular chaperone, activating the urease apoprotein by helping to assemble the nickel containing metallocenter of UreC. The UreE protein probably delivers the nickel.

It is found in the cytoplasm. Its function is as follows. Facilitates the functional incorporation of the urease nickel metallocenter. This process requires GTP hydrolysis, probably effectuated by UreG. This is Urease accessory protein UreG 2 from Methylorubrum extorquens (strain PA1) (Methylobacterium extorquens).